Consider the following 249-residue polypeptide: NH(3)-dependent NAD(+) synthetase (249 aa).

Residue 29 to 36 coordinates ATP; sequence GVSGGVDS. Asp-35 is a binding site for Mg(2+). Arg-116 serves as a coordination point for deamido-NAD(+). Thr-136 contacts ATP. Glu-141 is a Mg(2+) binding site. 2 residues coordinate deamido-NAD(+): Lys-149 and Asp-156. Residues Lys-165 and Ser-187 each coordinate ATP. Residue 233-234 coordinates deamido-NAD(+); the sequence is HK.

Belongs to the NAD synthetase family. As to quaternary structure, homodimer.

The enzyme catalyses deamido-NAD(+) + NH4(+) + ATP = AMP + diphosphate + NAD(+) + H(+). It participates in cofactor biosynthesis; NAD(+) biosynthesis; NAD(+) from deamido-NAD(+) (ammonia route): step 1/1. Catalyzes the ATP-dependent amidation of deamido-NAD to form NAD. Uses ammonia as a nitrogen source. The sequence is that of NH(3)-dependent NAD(+) synthetase from Syntrophomonas wolfei subsp. wolfei (strain DSM 2245B / Goettingen).